Consider the following 817-residue polypeptide: LPS-assembly protein LptD (817 aa).

A signal peptide spans 1–26 (MPALVVSPDLVRGAAGASAAPTPAPA). A disordered region spans residues 1-101 (MPALVVSPDL…ARKPGSTEVR (101 aa)). Residues 13 to 90 (GAAGASAAPT…PAASASPADA (78 aa)) show a composition bias toward low complexity.

This sequence belongs to the LptD family. As to quaternary structure, component of the lipopolysaccharide transport and assembly complex. Interacts with LptE and LptA.

It is found in the cell outer membrane. In terms of biological role, together with LptE, is involved in the assembly of lipopolysaccharide (LPS) at the surface of the outer membrane. This is LPS-assembly protein LptD from Azoarcus sp. (strain BH72).